Consider the following 131-residue polypeptide: Small ribosomal subunit protein bS6 (131 aa).

A disordered region spans residues 99-131 (ASPMVKAKDERRERREDFATETNEDSDAGDSEE). Residues 104–116 (KAKDERRERREDF) show a composition bias toward basic and acidic residues. A compositionally biased stretch (acidic residues) spans 120 to 131 (TNEDSDAGDSEE).

It belongs to the bacterial ribosomal protein bS6 family.

Its function is as follows. Binds together with bS18 to 16S ribosomal RNA. This chain is Small ribosomal subunit protein bS6, found in Sodalis glossinidius (strain morsitans).